Consider the following 127-residue polypeptide: Aspartate 1-decarboxylase (127 aa).

Ser-25 acts as the Schiff-base intermediate with substrate; via pyruvic acid in catalysis. Ser-25 is subject to Pyruvic acid (Ser). A substrate-binding site is contributed by Thr-57. The active-site Proton donor is the Tyr-58. 73–75 (GAA) is a binding site for substrate.

It belongs to the PanD family. In terms of assembly, heterooctamer of four alpha and four beta subunits. Requires pyruvate as cofactor. Is synthesized initially as an inactive proenzyme, which is activated by self-cleavage at a specific serine bond to produce a beta-subunit with a hydroxyl group at its C-terminus and an alpha-subunit with a pyruvoyl group at its N-terminus.

The protein resides in the cytoplasm. It carries out the reaction L-aspartate + H(+) = beta-alanine + CO2. It functions in the pathway cofactor biosynthesis; (R)-pantothenate biosynthesis; beta-alanine from L-aspartate: step 1/1. Functionally, catalyzes the pyruvoyl-dependent decarboxylation of aspartate to produce beta-alanine. This is Aspartate 1-decarboxylase from Bacillus subtilis (strain 168).